We begin with the raw amino-acid sequence, 430 residues long: Dye-decolorizing peroxidase Tfu_3078 (430 aa).

Positions 1 to 39 (MTEPDTERKGSSRRGFLAGLGAAALTGAGIGMAAGEVLR) form a signal peptide, tat-type signal. Residues 42-75 (LPDSDPAASPEAEQRLRMAAQRADATAAPQPGIS) form a disordered region. The span at 60-69 (AAQRADATAA) shows a compositional bias: low complexity. D242 functions as the Proton acceptor in the catalytic mechanism. Heme is bound at residue H338.

Belongs to the DyP-type peroxidase family. Monomer. Heme b serves as cofactor. Post-translationally, exported by the Tat system. The position of the signal peptide cleavage has not been experimentally proven.

It is found in the secreted. The enzyme catalyses Reactive Blue 5 + 2 H2O2 = 2,2'-disulfonyl azobenzene + 3-[(4-amino-6-chloro-1,3,5-triazin-2-yl)amino]benzenesulfonate + phthalate + 2 H2O + 2 H(+). Peroxidase that is able to convert a large number of compounds, but its physiological substrate is not known. Shows high reactivity towards anthraquinone dyes (e.g. Reactive Blue 19) and a modest activity towards standard peroxidase substrates (such as guaiacol and 2,6-dimethoxyphenol) and azo dyes (e.g. Reactive Blue 5). Is also able to oxidize aromatic sulfides enantioselectively, resulting in the corresponding (R)-sulfoxides, but with a poor efficiency. Does not display catalase activity. This is Dye-decolorizing peroxidase Tfu_3078 from Thermobifida fusca (strain YX).